We begin with the raw amino-acid sequence, 488 residues long: GTPase Der (488 aa).

EngA-type G domains lie at 3–166 and 199–372; these read PVVA…AEAM and IKLA…DSAT. GTP is bound by residues 9-16, 56-60, 118-121, 205-212, 252-256, and 317-320; these read GRPNVGKS, DTGGI, NKID, GKPNVGKS, DTAGV, and NKWD. Residues 373–457 enclose the KH-like domain; that stretch reads RRVSTSMLTR…PIQLRFQEGD (85 aa).

Belongs to the TRAFAC class TrmE-Era-EngA-EngB-Septin-like GTPase superfamily. EngA (Der) GTPase family. As to quaternary structure, associates with the 50S ribosomal subunit.

In terms of biological role, GTPase that plays an essential role in the late steps of ribosome biogenesis. The sequence is that of GTPase Der from Shewanella sp. (strain MR-7).